A 392-amino-acid polypeptide reads, in one-letter code: ERBB-3 BINDING PROTEIN 1 (392 aa).

Necessary for nucleolar localization stretches follow at residues 1–50 (MSSD…IVDI) and 298–392 (HLQP…NAQE). The interval 48 to 56 (VDICEKGDS) is RNA-binding. An interaction with RNA region spans residues 355-372 (GIKKKKGGGKKKKAQKAG). Positions 357–367 (KKKKGGGKKKK) match the Nuclear localization signal motif. Positions 358-369 (KKKGGGKKKKAQ) are enriched in basic residues. The interval 358–392 (KKKGGGKKKKAQKAGEKGEASTEAEPMDASSNAQE) is disordered.

The protein belongs to the peptidase M24 family. In terms of assembly, component of a ribonucleoprotein complex. Interacts with REIL1 and REIL2. In terms of tissue distribution, strongly expressed in calls, roots and flowers, to a lower extent, in stems and siliques, but hardly detectable in leaves.

It is found in the nucleus. Functionally, binds RNA. Associates with 28S, 18S and 5.8S mature rRNAs, several rRNA precursors and probably U3 small nucleolar RNA. May be involved in regulation of intermediate and late steps of rRNA processing. May be involved in ribosome assembly. Required for expression of cell cycle genes such as CYCD3-1, RNR2A and CDKB1-1. Promotes, in a dose- and auxin-dependent manner, organ growth by stimulating both cell proliferation and expansion, via the regulation of RBR1 levels. The chain is ERBB-3 BINDING PROTEIN 1 from Arabidopsis thaliana (Mouse-ear cress).